The chain runs to 660 residues: Leucine-rich repeat transmembrane protein FLRT2 (660 aa).

Residues 1–35 (MGLQTTKWPGRGAFILKFWLIISLGLYLQVSKLLA) form the signal peptide. 2 disulfide bridges follow: Cys36–Cys42 and Cys40–Cys49. The 28-residue stretch at 36-63 (CPSVCRCDRNFVYCNERSLTSVPLGIPE) folds into the LRRNT domain. Over 36-540 (CPSVCRCDRN…QTTSHSMGSP (505 aa)) the chain is Extracellular. 10 LRR repeats span residues 62–87 (PEGVTVLYLHNNQINNAGFPAELHNV), 88–108 (QSVHTVYLYGNQLDEFPMNLP), 109–131 (KNVRVLHLQENNIQTISRAALAQ), 132–157 (LLKLEELHLDDNSISTVGVEDGAFRE), 159–181 (ISLKLLFLSKNHLSSVPVGLPVD), 183–202 (QELRVDENRIAVISDMAFQN), 203–228 (LTSLERLIVDGNLLTNKGIAEGTFSH), 229–251 (LTKLKEFSIVRNSLSHPPPDLPG), 252–274 (THLIRLYLQDNQINHIPLTAFAN), and 275–298 (LRKLERLDISNNQLRMLTQGVFDH). N-linked (GlcNAc...) asparagine glycosylation is present at Asn202. The region spanning 310-362 (NPWFCDCSIKWVTEWLKYIPSSLNVRGFMCQGPEQVRGMAVRELNMNLLSCPT) is the LRRCT domain. 2 disulfides stabilise this stretch: Cys314–Cys339 and Cys316–Cys360. Residues 371–396 (TPAPSTVSPTTQSPTLSVPSPSRGSV) are compositionally biased toward low complexity. The disordered stretch occupies residues 371 to 413 (TPAPSTVSPTTQSPTLSVPSPSRGSVPPAPTPSKLPTIPDWDG). The 99-residue stretch at 419 to 517 (PPISERIQLS…ICSEATTHAS (99 aa)) folds into the Fibronectin type-III domain. The chain crosses the membrane as a helical span at residues 541–561 (FLLAGLIGGAVIFVLVVLLSV). Over 562-660 (FCWHMHKKGR…SVPDLEHCHT (99 aa)) the chain is Cytoplasmic.

As to quaternary structure, self-associates (via leucine-rich repeats), giving rise to homooligomers. Interacts with FGFR1. Interacts with FGFR2. Interacts (via extracellular domain) with ADGRL1/LPHN1. Interacts (via extracellular domain) with ADGRL3 (via olfactomedin-like domain). Interacts (via extracellular domain) with UNC5D (via the first Ig-like domain). Can also interact (via extracellular domain) with UNC5B, but with much lower affinity. Interacts (via extracellular domain) with FN1. Post-translationally, N-glycosylated. In terms of processing, proteolytic cleavage in the juxtamembrane region gives rise to a soluble ectodomain. Cleavage is probably effected by a metalloprotease. Detected in adult brain (at protein level).

Its subcellular location is the cell membrane. It localises to the endoplasmic reticulum membrane. The protein resides in the cell junction. The protein localises to the focal adhesion. It is found in the secreted. Its subcellular location is the extracellular space. It localises to the extracellular matrix. The protein resides in the synapse. The protein localises to the synaptosome. It is found in the microsome membrane. In terms of biological role, functions in cell-cell adhesion, cell migration and axon guidance. Mediates cell-cell adhesion via its interactions with ADGRL3 and probably also other latrophilins that are expressed at the surface of adjacent cells. May play a role in the migration of cortical neurons during brain development via its interaction with UNC5D. Mediates axon growth cone collapse and plays a repulsive role in neuron guidance via its interaction with UNC5D, and possibly also other UNC-5 family members. Plays a role in fibroblast growth factor-mediated signaling cascades. Required for normal organization of the cardiac basement membrane during embryogenesis, and for normal embryonic epicardium and heart morphogenesis. The sequence is that of Leucine-rich repeat transmembrane protein FLRT2 from Mus musculus (Mouse).